The following is a 396-amino-acid chain: Phosphoglycerate kinase (396 aa).

Substrate is bound by residues 21–23 (DFN), Arg37, 60–63 (HLGR), Arg121, and Arg154. ATP-binding positions include Lys205, Gly296, Glu327, and 353 to 356 (GGDS).

The protein belongs to the phosphoglycerate kinase family. Monomer.

It is found in the cytoplasm. It catalyses the reaction (2R)-3-phosphoglycerate + ATP = (2R)-3-phospho-glyceroyl phosphate + ADP. The protein operates within carbohydrate degradation; glycolysis; pyruvate from D-glyceraldehyde 3-phosphate: step 2/5. This chain is Phosphoglycerate kinase, found in Anaeromyxobacter dehalogenans (strain 2CP-1 / ATCC BAA-258).